The chain runs to 211 residues: Cytochrome c biogenesis ATP-binding export protein CcmA (211 aa).

The 203-residue stretch at 8–210 (LEAKNLQCER…EVRRIQLGAV (203 aa)) folds into the ABC transporter domain. An ATP-binding site is contributed by 40–47 (GPNGAGKT).

Belongs to the ABC transporter superfamily. CcmA exporter (TC 3.A.1.107) family. In terms of assembly, the complex is composed of two ATP-binding proteins (CcmA) and two transmembrane proteins (CcmB).

It is found in the cell inner membrane. It catalyses the reaction heme b(in) + ATP + H2O = heme b(out) + ADP + phosphate + H(+). Functionally, part of the ABC transporter complex CcmAB involved in the biogenesis of c-type cytochromes; once thought to export heme, this seems not to be the case, but its exact role is uncertain. Responsible for energy coupling to the transport system. This is Cytochrome c biogenesis ATP-binding export protein CcmA from Hahella chejuensis (strain KCTC 2396).